The primary structure comprises 253 residues: REF/SRPP-like protein Os05g0151300/LOC_Os05g05940 (253 aa).

The disordered stretch occupies residues 1–26 (MADSGSDAPISNRPEEEVTVEKTPEM). The span at 13 to 26 (RPEEEVTVEKTPEM) shows a compositional bias: basic and acidic residues.

The protein belongs to the REF/SRPP family.

The polypeptide is REF/SRPP-like protein Os05g0151300/LOC_Os05g05940 (Oryza sativa subsp. japonica (Rice)).